Reading from the N-terminus, the 143-residue chain is Mediator of RNA polymerase II transcription subunit 22 (143 aa).

It belongs to the Mediator complex subunit 22 family. In terms of assembly, component of the Mediator complex, which includes at least CDK8, MED4, MED6, MED11, MED14, MED17, MED18, MED20, MED21, MED22, MED27, MED28, MED30 and MED31.

The protein resides in the nucleus. In terms of biological role, component of the Mediator complex, a coactivator involved in the regulated transcription of nearly all RNA polymerase II-dependent genes. Mediator functions as a bridge to convey information from gene-specific regulatory proteins to the basal RNA polymerase II transcription machinery. Mediator is recruited to promoters by direct interactions with regulatory proteins and serves as a scaffold for the assembly of a functional preinitiation complex with RNA polymerase II and the general transcription factors. In Drosophila melanogaster (Fruit fly), this protein is Mediator of RNA polymerase II transcription subunit 22 (MED22).